The following is a 347-amino-acid chain: Large ribosomal subunit protein uL3 (347 aa).

Residues 325 to 347 are disordered; that stretch reads RPPKKKPPVERPQITYISRESKQ.

It belongs to the universal ribosomal protein uL3 family. As to quaternary structure, part of the 50S ribosomal subunit. Forms a cluster with proteins L14 and L24e.

Its function is as follows. One of the primary rRNA binding proteins, it binds directly near the 3'-end of the 23S rRNA, where it nucleates assembly of the 50S subunit. This is Large ribosomal subunit protein uL3 from Thermococcus onnurineus (strain NA1).